A 462-amino-acid chain; its full sequence is A-type ATP synthase subunit B (462 aa).

Belongs to the ATPase alpha/beta chains family. As to quaternary structure, has multiple subunits with at least A(3), B(3), C, D, E, F, H, I and proteolipid K(x).

Its subcellular location is the cell membrane. Functionally, component of the A-type ATP synthase that produces ATP from ADP in the presence of a proton gradient across the membrane. The B chain is a regulatory subunit. The protein is A-type ATP synthase subunit B of Pyrococcus furiosus (strain ATCC 43587 / DSM 3638 / JCM 8422 / Vc1).